A 281-amino-acid chain; its full sequence is Proteasome subunit beta 2 (281 aa).

The propeptide at 1-53 (MEANTRSTGRLPAAFLTPGSSSFMDFLSEHQPEILPGNRQLPPTQGVIEAPHG) is removed in mature form; by autocatalysis. Thr-54 acts as the Nucleophile in catalysis.

Belongs to the peptidase T1B family. In terms of assembly, the 20S proteasome core is composed of 14 alpha and 14 beta subunits that assemble into four stacked heptameric rings, resulting in a barrel-shaped structure. The two inner rings, each composed of seven catalytic beta subunits, are sandwiched by two outer rings, each composed of seven alpha subunits. The catalytic chamber with the active sites is on the inside of the barrel. Has a gated structure, the ends of the cylinder being occluded by the N-termini of the alpha-subunits. Is capped by the proteasome-associated ATPase, ARC.

It localises to the cytoplasm. The catalysed reaction is Cleavage of peptide bonds with very broad specificity.. The protein operates within protein degradation; proteasomal Pup-dependent pathway. Its activity is regulated as follows. The formation of the proteasomal ATPase ARC-20S proteasome complex, likely via the docking of the C-termini of ARC into the intersubunit pockets in the alpha-rings, may trigger opening of the gate for substrate entry. Interconversion between the open-gate and close-gate conformations leads to a dynamic regulation of the 20S proteasome proteolysis activity. Component of the proteasome core, a large protease complex with broad specificity involved in protein degradation. This Streptomyces avermitilis (strain ATCC 31267 / DSM 46492 / JCM 5070 / NBRC 14893 / NCIMB 12804 / NRRL 8165 / MA-4680) protein is Proteasome subunit beta 2.